The sequence spans 158 residues: MTNAFTHINADGNAHMVDVTDKSVTEREARAEAYIEMASDTLEMIMSGSHHKGDVFATARIAGIQAAKKTSDLIPLCHPLMLTKVEVELEAQPEHNRVWIRSLCKLSGKTGVEMEALTAASTAALTIYDMCKAVQKDMVISQVRLLEKRGGKSGHFKV.

Substrate contacts are provided by residues 76 to 78 and 114 to 115; these read LCH and ME. Aspartate 129 is a catalytic residue.

The protein belongs to the MoaC family. In terms of assembly, homohexamer; trimer of dimers.

The enzyme catalyses (8S)-3',8-cyclo-7,8-dihydroguanosine 5'-triphosphate = cyclic pyranopterin phosphate + diphosphate. It functions in the pathway cofactor biosynthesis; molybdopterin biosynthesis. Catalyzes the conversion of (8S)-3',8-cyclo-7,8-dihydroguanosine 5'-triphosphate to cyclic pyranopterin monophosphate (cPMP). This chain is Cyclic pyranopterin monophosphate synthase, found in Shewanella piezotolerans (strain WP3 / JCM 13877).